Consider the following 149-residue polypeptide: Large ribosomal subunit protein uL22c (149 aa).

This sequence belongs to the universal ribosomal protein uL22 family. As to quaternary structure, part of the 50S ribosomal subunit.

It localises to the plastid. It is found in the chloroplast. In terms of biological role, this protein binds specifically to 23S rRNA. Functionally, the globular domain of the protein is located near the polypeptide exit tunnel on the outside of the subunit, while an extended beta-hairpin is found that lines the wall of the exit tunnel in the center of the 70S ribosome. This Oryza nivara (Indian wild rice) protein is Large ribosomal subunit protein uL22c (rpl22).